Here is a 729-residue protein sequence, read N- to C-terminus: Methionine--tRNA ligase (729 aa).

The 'HIGH' region signature appears at P12 to N22. Zn(2+) is bound by residues C143, C146, C155, and C158. The 'KMSKS' region motif lies at K330–S334. K333 is a binding site for ATP. Residues F565 to I670 form the tRNA-binding domain.

Belongs to the class-I aminoacyl-tRNA synthetase family. MetG type 1 subfamily. Homodimer. The cofactor is Zn(2+).

The protein localises to the cytoplasm. The enzyme catalyses tRNA(Met) + L-methionine + ATP = L-methionyl-tRNA(Met) + AMP + diphosphate. In terms of biological role, is required not only for elongation of protein synthesis but also for the initiation of all mRNA translation through initiator tRNA(fMet) aminoacylation. This is Methionine--tRNA ligase from Borrelia hermsii (strain HS1 / DAH).